The sequence spans 150 residues: Large ribosomal subunit protein bL9 (150 aa).

It belongs to the bacterial ribosomal protein bL9 family.

Its function is as follows. Binds to the 23S rRNA. The protein is Large ribosomal subunit protein bL9 of Burkholderia cenocepacia (strain HI2424).